The sequence spans 122 residues: Large ribosomal subunit protein uL18 (122 aa).

The protein belongs to the universal ribosomal protein uL18 family. In terms of assembly, part of the 50S ribosomal subunit; part of the 5S rRNA/L5/L18/L25 subcomplex. Contacts the 5S and 23S rRNAs.

Functionally, this is one of the proteins that bind and probably mediate the attachment of the 5S RNA into the large ribosomal subunit, where it forms part of the central protuberance. This chain is Large ribosomal subunit protein uL18, found in Synechococcus sp. (strain JA-3-3Ab) (Cyanobacteria bacterium Yellowstone A-Prime).